Reading from the N-terminus, the 159-residue chain is Protein-export protein SecB (159 aa).

It belongs to the SecB family. Homotetramer, a dimer of dimers. One homotetramer interacts with 1 SecA dimer.

The protein localises to the cytoplasm. Functionally, one of the proteins required for the normal export of preproteins out of the cell cytoplasm. It is a molecular chaperone that binds to a subset of precursor proteins, maintaining them in a translocation-competent state. It also specifically binds to its receptor SecA. The protein is Protein-export protein SecB of Burkholderia vietnamiensis (strain G4 / LMG 22486) (Burkholderia cepacia (strain R1808)).